The following is a 975-amino-acid chain: Homeobox protein cut-like 1 (975 aa).

Positions 1–73 form a DNA-binding region, CUT 1; it reads SRQVKEQLIK…ILALRSIQGR (73 aa). Disordered stretches follow at residues 90–113 and 126–148; these read PKRRNGSEGNITTRIRASETGSDE and LQVQKTAEPAQPSSTSSSGTSDD. Residues 113–169 adopt a coiled-coil conformation; that stretch reads EAIKSILEQAKRELQVQKTAEPAQPSSTSSSGTSDDAIRSILQQARREMEAQQAALD. At serine 207 the chain carries Phosphoserine. The disordered stretch occupies residues 209 to 246; the sequence is KKPPTAPDTSASTLPNPPALKKESQDAPGLDLPGAAES. Residues lysine 229, lysine 255, and lysine 286 each participate in a glycyl lysine isopeptide (Lys-Gly) (interchain with G-Cter in SUMO2) cross-link. A compositionally biased stretch (basic and acidic residues) spans 262-297; that stretch reads GVWKDHWWSTVQPERKSAAPPEDAKSEEAGGTKEKG. Residues 262 to 369 form a disordered region; it reads GVWKDHWWST…SKPAKPSVPP (108 aa). A compositionally biased stretch (polar residues) spans 328-351; sequence RTPQSSELSLTGASRSETPQNSPL. A Phosphoserine modification is found at serine 349. The CUT 2 DNA-binding region spans 374 to 461; the sequence is QYEIYMYQEV…QGVLPVQGQQ (88 aa). A compositionally biased stretch (polar residues) spans 476–489; that stretch reads LQQGCVSSESTPKT. The tract at residues 476-549 is disordered; that stretch reads LQQGCVSSES…SQPATPLPLS (74 aa). The segment covering 490–506 has biased composition (low complexity); that stretch reads SASCSPAPESPMSSSES. Phosphoserine occurs at positions 499 and 509. Residues 557–644 constitute a DNA-binding region (CUT 3); sequence QELVAMSPEL…VEKLMDMKRM (88 aa). The tract at residues 652–687 is disordered; it reads RRHSSVSDSQPCEPPSVGIDYSQGASPQPQHQLKKP. The homeobox DNA-binding region spans 684–743; that stretch reads LKKPRVVLAPEEKEALKRAYQQKPYPSPKTIEELATQLNLKTSTVINWFHNYRSRIRREL. At serine 710 the chain carries Phosphoserine. Lysine 724 is covalently cross-linked (Glycyl lysine isopeptide (Lys-Gly) (interchain with G-Cter in SUMO2)). Residues 752 to 949 form a disordered region; it reads SQGQAGARHS…DSRDNPLRKK (198 aa). Low complexity predominate over residues 756 to 773; it reads AGARHSPSARSSGAAPSS. Serine 777 carries the post-translational modification Phosphoserine. Over residues 780–813 the composition is skewed to low complexity; it reads GVEAAEGPGAADAEESAPAAAAKSQGGPAEAAVA. Residues 838–847 show a composition bias toward gly residues; the sequence is PGRRGGGGPA. Over residues 850–860 the composition is skewed to low complexity; sequence APAAPAAAARG. Residues 861 to 890 show a composition bias toward basic residues; it reads PSRRPGARAKPRRRRRRRRRHARGGGRRYL. Positions 907-929 are enriched in low complexity; sequence RSSALPSTSAPAAARRPSSLQSL. Serine 925 is subject to Phosphoserine. Over residues 937 to 946 the composition is skewed to basic and acidic residues; it reads GARDSRDNPL. A phosphoserine mark is found at serine 956 and serine 966.

It belongs to the CUT homeobox family. In terms of assembly, interacts with BANP. In terms of processing, as cells progress into S phase, a fraction of CUX1 molecules is proteolytically processed into N-terminally truncated proteins of 110 kDa by CTSL. Cell cycle-dependent processing of CUX1 serves to generate a CDP/Cux p110 with distinct DNA binding and transcriptional properties. Post-translationally, phosphorylated by PKA. A broad pattern of expression observed in tissues of diverse origins, such as cartilage, liver, brain, lung, heart and skeletal muscle. There are 2 distinct protein species: the larger one (230-250 kDa) is found mainly in adult brain, lung and heart, and the smaller one (180-190 kDa) predominates in early embryonic tissues.

The protein localises to the nucleus. Its function is as follows. Transcription factor involved in the control of neuronal differentiation in the brain. Regulates dendrite development and branching, and dendritic spine formation in cortical layers II-III. Also involved in the control of synaptogenesis. In addition, it has probably a broad role in mammalian development as a repressor of developmentally regulated gene expression. May act by preventing binding of positively-activing CCAAT factors to promoters. Component of nf-munr repressor; binds to the matrix attachment regions (MARs) (5' and 3') of the immunoglobulin heavy chain enhancer. Represses T-cell receptor (TCR) beta enhancer function by binding to MARbeta, an ATC-rich DNA sequence located upstream of the TCR beta enhancer. Binds to the TH enhancer; may require the basic helix-loop-helix protein TCF4 as a coactivator. Plays a role in cell cycle progression, in particular at the G1/S transition. As cells progress into S phase, a fraction of CUX1 molecules is proteolytically processed into N-terminally truncated proteins of 110 kDa. While CUX1 only transiently binds to DNA and carries the CCAAT-displacement activity, CDP/Cux p110 makes a stable interaction with DNA and stimulates expression of genes such as POLA1. The sequence is that of Homeobox protein cut-like 1 (CUX1) from Canis lupus familiaris (Dog).